The primary structure comprises 179 residues: UPF0303 protein P4H10.12 (179 aa).

Belongs to the UPF0303 family.

The polypeptide is UPF0303 protein P4H10.12 (Schizosaccharomyces pombe (strain 972 / ATCC 24843) (Fission yeast)).